The primary structure comprises 355 residues: UPF0421 protein BCE33L2478 (355 aa).

The next 4 membrane-spanning stretches (helical) occupy residues 19 to 39 (IAVFLTVLVCEFFNIPTIFAV), 74 to 94 (FTFFLGHQALSYALAAMFTIV), 109 to 129 (TLTAVAMIPITADHYFTAFLI), and 131 to 151 (LATTSTGIIVSTVVNFFILPP).

It belongs to the UPF0421 family.

It localises to the cell membrane. The protein is UPF0421 protein BCE33L2478 of Bacillus cereus (strain ZK / E33L).